The chain runs to 220 residues: Putative threonylcarbamoyl-AMP synthase (220 aa).

The region spanning 17–202 is the YrdC-like domain; it reads ARGIASAVAA…TPRILRAGPV (186 aa).

This sequence belongs to the SUA5 family.

It is found in the cytoplasm. The enzyme catalyses L-threonine + hydrogencarbonate + ATP = L-threonylcarbamoyladenylate + diphosphate + H2O. Functionally, required for the formation of a threonylcarbamoyl group on adenosine at position 37 (t(6)A37) in tRNAs that read codons beginning with adenine. Catalyzes the conversion of L-threonine, HCO(3)(-)/CO(2) and ATP to give threonylcarbamoyl-AMP (TC-AMP) as the acyladenylate intermediate, with the release of diphosphate. The chain is Putative threonylcarbamoyl-AMP synthase from Mycobacterium leprae (strain TN).